A 121-amino-acid chain; its full sequence is Small ribosomal subunit protein uS13 (121 aa).

The interval 88-121 (GMRHRRGLPVRGQHTKNNARTRKGKAVAIANKKK) is disordered.

It belongs to the universal ribosomal protein uS13 family. In terms of assembly, part of the 30S ribosomal subunit. Forms a loose heterodimer with protein S19. Forms two bridges to the 50S subunit in the 70S ribosome.

Its function is as follows. Located at the top of the head of the 30S subunit, it contacts several helices of the 16S rRNA. In the 70S ribosome it contacts the 23S rRNA (bridge B1a) and protein L5 of the 50S subunit (bridge B1b), connecting the 2 subunits; these bridges are implicated in subunit movement. Contacts the tRNAs in the A and P-sites. In Limosilactobacillus reuteri subsp. reuteri (strain JCM 1112) (Lactobacillus reuteri), this protein is Small ribosomal subunit protein uS13.